A 197-amino-acid chain; its full sequence is Pyridoxal 5'-phosphate synthase subunit PdxT (197 aa).

54–56 provides a ligand contact to L-glutamine; sequence GES. Residue Cys-86 is the Nucleophile of the active site. Residues Arg-113 and 141 to 142 each bind L-glutamine; that span reads IR. Active-site charge relay system residues include His-177 and Glu-179.

Belongs to the glutaminase PdxT/SNO family. In terms of assembly, in the presence of PdxS, forms a dodecamer of heterodimers. Only shows activity in the heterodimer.

The catalysed reaction is aldehydo-D-ribose 5-phosphate + D-glyceraldehyde 3-phosphate + L-glutamine = pyridoxal 5'-phosphate + L-glutamate + phosphate + 3 H2O + H(+). It catalyses the reaction L-glutamine + H2O = L-glutamate + NH4(+). It participates in cofactor biosynthesis; pyridoxal 5'-phosphate biosynthesis. Its function is as follows. Catalyzes the hydrolysis of glutamine to glutamate and ammonia as part of the biosynthesis of pyridoxal 5'-phosphate. The resulting ammonia molecule is channeled to the active site of PdxS. The protein is Pyridoxal 5'-phosphate synthase subunit PdxT of Haloarcula marismortui (strain ATCC 43049 / DSM 3752 / JCM 8966 / VKM B-1809) (Halobacterium marismortui).